The chain runs to 697 residues: uncharacterized protein (697 aa).

14 consecutive transmembrane segments (helical) span residues 65–85 (PVRNFIEEGCDGVTDLYVGIY), 106–126 (CTFRTNNVKLGYLIVDELHNF), 131–151 (YRQSQFGGITNLDFDAFEKAI), 163–183 (DAALQRIGLTGLAKKSMDINE), 194–214 (LSSYPTRMFNLIKEKSKVPLG), 227–247 (TSATTTASINVRTSATTTASI), 286–306 (STNATTTESTNASAKEDANKD), 316–336 (PVTDINKEPYKRKGSQMVLLE), 361–381 (SDEIKHLFLYGIDIYFCPEGV), 394–414 (MFELCVCWAGQKVSYRRMAWE), 419–439 (ERMLRNDEEYKEYLEDIEPYH), 450–470 (SVKRREIYSQIQRNYAWYLAI), 487–507 (QGSQVFRMSGRQIKELYYKVW), and 558–578 (TSAGLQGPQYVKLQFSRHHRQ). Residues 246-321 (SINVRTSATT…NRFHPVTDIN (76 aa)) are disordered. Over residues 251 to 298 (TSATTTESTNSNTNATTTESTNSSTNATTTASTNSSTNATTTESTNAS) the composition is skewed to low complexity. The span at 299-321 (AKEDANKDGNAEDNRFHPVTDIN) shows a compositional bias: basic and acidic residues.

The protein resides in the membrane. This is an uncharacterized protein from Saccharomyces cerevisiae (strain ATCC 204508 / S288c) (Baker's yeast).